The following is a 355-amino-acid chain: Replication-associated protein (355 aa).

Residues 11–114 (LHRTANTFLT…PLALFERGTF (104 aa)) enclose the CRESS-DNA virus Rep endonuclease domain. Residues 18 to 21 (FLTY) carry the RCR-1 motif. Residues Glu52, His60, and His62 each contribute to the a divalent metal cation site. The RCR-2 motif lies at 60-62 (HLH). The For DNA cleavage activity role is filled by Tyr100. The RCR-3 signature appears at 100-103 (YILK). Glu104 contacts a divalent metal cation. The interval 175–187 (SANKLFPDIQEEF) is oligomerization. 229–236 (GPTRTGKS) provides a ligand contact to ATP. Residues 252–270 (VDWSSYNEDAIYNIVDDIP) form a transactivation region. Positions 292–303 (KYGKKKKVQMKS) match the Nuclear localization signal motif.

It belongs to the geminiviridae Rep protein family. In terms of assembly, homooligomer. Rep binds to repeated DNA motifs (iterons). Forms the O-complex, which is a Rep-DNA complex involved in the initiation of RCR. Part of the C- and V-complexes which are RepA-Rep-DNA complexes involved in the c-sense and v-sense transcription. Mg(2+) serves as cofactor. The cofactor is Mn(2+).

Its subcellular location is the host nucleus. Essential for the replication of viral ssDNA. The closed circular ssDNA genome is first converted to a superhelical dsDNA. Rep binds a specific region at the genome origin of replication. It introduces an endonucleolytic nick within the conserved sequence 5'-TAATATTAC-3' in the intergenic region of the genome present in all geminiviruses, thereby initiating the rolling circle replication (RCR). Following cleavage, binds covalently to the 5'-phosphate of DNA as a tyrosyl ester. The cleavage gives rise to a free 3'-OH that serves as a primer for the cellular DNA polymerase. The polymerase synthesizes the (+) strand DNA by rolling circle mechanism. After one round of replication, a Rep-catalyzed nucleotidyl transfer reaction releases a circular single-stranded virus genome, thereby terminating the replication. Displays origin-specific DNA cleavage, nucleotidyl transferase, ATPase and helicase activities. Acts as an inhibitor of C-sense gene transcription. The polypeptide is Replication-associated protein (Maize streak virus genotype D (isolate Raw) (MSV)).